Consider the following 347-residue polypeptide: Transcription factor JunD (347 aa).

The tract at residues 1 to 43 (METPFYGDEALSGLGGGASGSGGSFASPGRLFPGAPPTAAAGS) is disordered. Positions 13–23 (GLGGGASGSGG) are enriched in gly residues. Residues 27 to 39 (SPGRLFPGAPPTA) carry the Menin-binding motif (MBM) motif. The MAP kinase docking motif; essential for its phosphorylation motif lies at 46–55 (KKDALTLSLS). The interval 62-86 (LKPAAAPPPTPLRADGAPSAAPPDG) is disordered. The span at 73 to 86 (LRADGAPSAAPPDG) shows a compositional bias: low complexity. Serine 90 bears the Phosphoserine mark. Serine 100 is subject to Phosphoserine; by MAPK8. At threonine 117 the chain carries Phosphothreonine. The disordered stretch occupies residues 244–264 (QTVPDVPSFGESPPLSPIDMD). 3 positions are modified to phosphoserine: serine 251, serine 255, and serine 259. The segment at 268–295 (RIKAERKRLRNRIAASKCRKRKLERISR) is basic motif. One can recognise a bZIP domain in the interval 268 to 331 (RIKAERKRLR…AQLKQKVLSH (64 aa)). The segment at 296–324 (LEEKVKTLKSQNTELASTASLLREQVAQL) is leucine-zipper.

Belongs to the bZIP family. Jun subfamily. Heterodimer; binds DNA as a heterodimer. Component of an AP-1 transcription factor complex composed of JUN-FOS heterodimers. As part of the AP-1 transcription factor complex, forms heterodimers with FOS proteins, thereby binding to the AP-1 consensus sequence and stimulating transcription. Forms heterodimers with FOSB; thereby binding to the AP-1 consensus sequence. Interacts (via MBM motif) with MEN1; this interaction represses transcriptional activation. Interacts with MAPK10; this interaction is inhibited in the presence of MEN1. Phosphorylated by MAP kinases MAPK8 and MAPK10; phosphorylation is inhibited in the presence of MEN1.

The protein resides in the nucleus. In terms of biological role, transcription factor binding AP-1 sites. Heterodimerizes with proteins of the FOS family to form an AP-1 transcription factor complex, thereby enhancing their DNA binding activity to an AP-1 consensus sequence 3'-TGA[GC]TCA-5' and enhancing their transcriptional activity. The chain is Transcription factor JunD (JUND) from Homo sapiens (Human).